The following is a 480-amino-acid chain: Argininosuccinate lyase (480 aa).

A disordered region spans residues 1–20 (MTQQDGGQAGQAEPTKLWGG).

It belongs to the lyase 1 family. Argininosuccinate lyase subfamily.

It is found in the cytoplasm. It catalyses the reaction 2-(N(omega)-L-arginino)succinate = fumarate + L-arginine. It functions in the pathway amino-acid biosynthesis; L-arginine biosynthesis; L-arginine from L-ornithine and carbamoyl phosphate: step 3/3. This is Argininosuccinate lyase from Saccharopolyspora erythraea (strain ATCC 11635 / DSM 40517 / JCM 4748 / NBRC 13426 / NCIMB 8594 / NRRL 2338).